We begin with the raw amino-acid sequence, 476 residues long: Bifunctional protein HldE (476 aa).

The segment at 1-318 (MKPILPDYNN…AEAIHGSRDT (318 aa)) is ribokinase. 195-198 (NMSE) is a binding site for ATP. Residue D264 is part of the active site. The cytidylyltransferase stretch occupies residues 344 to 476 (MTNGCFDILH…IIDAIKGGRG (133 aa)).

It in the N-terminal section; belongs to the carbohydrate kinase PfkB family. This sequence in the C-terminal section; belongs to the cytidylyltransferase family. Homodimer.

The enzyme catalyses D-glycero-beta-D-manno-heptose 7-phosphate + ATP = D-glycero-beta-D-manno-heptose 1,7-bisphosphate + ADP + H(+). It catalyses the reaction D-glycero-beta-D-manno-heptose 1-phosphate + ATP + H(+) = ADP-D-glycero-beta-D-manno-heptose + diphosphate. It functions in the pathway nucleotide-sugar biosynthesis; ADP-L-glycero-beta-D-manno-heptose biosynthesis; ADP-L-glycero-beta-D-manno-heptose from D-glycero-beta-D-manno-heptose 7-phosphate: step 1/4. It participates in nucleotide-sugar biosynthesis; ADP-L-glycero-beta-D-manno-heptose biosynthesis; ADP-L-glycero-beta-D-manno-heptose from D-glycero-beta-D-manno-heptose 7-phosphate: step 3/4. Its pathway is bacterial outer membrane biogenesis; LPS core biosynthesis. In terms of biological role, catalyzes the phosphorylation of D-glycero-D-manno-heptose 7-phosphate at the C-1 position to selectively form D-glycero-beta-D-manno-heptose-1,7-bisphosphate. Catalyzes the ADP transfer from ATP to D-glycero-beta-D-manno-heptose 1-phosphate, yielding ADP-D-glycero-beta-D-manno-heptose. This Vibrio vulnificus (strain YJ016) protein is Bifunctional protein HldE.